A 288-amino-acid polypeptide reads, in one-letter code: Energy-coupling factor transporter ATP-binding protein EcfA2 (288 aa).

In terms of domain architecture, ABC transporter spans 3–246; sequence IKLEQLGYCY…PDELVDLGLS (244 aa). Residue 40–47 coordinates ATP; the sequence is GHTGSGKS.

This sequence belongs to the ABC transporter superfamily. Energy-coupling factor EcfA family. Forms a stable energy-coupling factor (ECF) transporter complex composed of 2 membrane-embedded substrate-binding proteins (S component), 2 ATP-binding proteins (A component) and 2 transmembrane proteins (T component).

It is found in the cell membrane. Functionally, ATP-binding (A) component of a common energy-coupling factor (ECF) ABC-transporter complex. Unlike classic ABC transporters this ECF transporter provides the energy necessary to transport a number of different substrates. This chain is Energy-coupling factor transporter ATP-binding protein EcfA2, found in Listeria monocytogenes serotype 4b (strain F2365).